The sequence spans 156 residues: Small ribosomal subunit protein uS7 (156 aa).

The protein belongs to the universal ribosomal protein uS7 family. Part of the 30S ribosomal subunit. Contacts proteins S9 and S11.

One of the primary rRNA binding proteins, it binds directly to 16S rRNA where it nucleates assembly of the head domain of the 30S subunit. Is located at the subunit interface close to the decoding center, probably blocks exit of the E-site tRNA. The polypeptide is Small ribosomal subunit protein uS7 (Clostridium botulinum (strain Alaska E43 / Type E3)).